Consider the following 147-residue polypeptide: Flagellar assembly factor FliW (147 aa).

It belongs to the FliW family. As to quaternary structure, interacts with translational regulator CsrA and flagellin(s).

It is found in the cytoplasm. Its function is as follows. Acts as an anti-CsrA protein, binds CsrA and prevents it from repressing translation of its target genes, one of which is flagellin. Binds to flagellin and participates in the assembly of the flagellum. The protein is Flagellar assembly factor FliW of Chromobacterium violaceum (strain ATCC 12472 / DSM 30191 / JCM 1249 / CCUG 213 / NBRC 12614 / NCIMB 9131 / NCTC 9757 / MK).